Consider the following 259-residue polypeptide: Oxidase ustYb (259 aa).

Residues 36–56 (IIYTSLAFVGFIEILFFGIFF) form a helical membrane-spanning segment. N-linked (GlcNAc...) asparagine glycosylation is found at asparagine 102 and asparagine 122. 2 consecutive short sequence motifs (HXXHC) follow at residues 147-151 (HQLHC) and 197-201 (HVDHC).

The protein belongs to the ustYa family.

It localises to the membrane. The protein operates within mycotoxin biosynthesis. Oxidase; part of the gene cluster that mediates the biosynthesis of the secondary metabolite ustiloxin B, an antimitotic tetrapeptide. First, ustA is processed by the subtilisin-like endoprotease Kex2 that is outside the ustiloxin B gene cluster, at the C-terminal side of Arg-Lys, after transfer to Golgi apparatus through the endoplasmic reticulum (ER). Cleavage by KEX2 generates 16 peptides YAIG-I to YAIG-XVI. To process the precursor peptide further, at least two peptidases are necessary to cleave the N-terminal and C-terminal sides of the Tyr-Ala-Ile-Gly core peptide which serves as backbone for the synthesis of ustiloxin B, through cyclization and modification of the tyrosine with a non-protein coding amino acid, norvaline. One of the two peptidases must be the serine peptidase ustP; and the other pepdidase is probably ustH. Macrocyclization of the core peptide derived from ustA requires the tyrosinase ustQ, as well as the homologous oxidases ustYa and ustYb, and leads to the production of the first cyclization product N-desmethylustiloxin F. For the formation of N-desmethylustiloxin F, three oxidation steps are required, hydroxylation at the benzylic position, hydroxylation at either the aromatic ring of Tyr or beta-position of Ile, and oxidative cyclization. UstQ may catalyze the oxidation of a phenol moiety, whereas the ustYa and ustYb are most likely responsible for the remaining two-step oxidations. N-desmethylustiloxin F is then methylated by ustM to yield ustiloxin F which in turn substrate of the cytochrome P450 monooxygenase ustC which catalyzes the formation of S-deoxyustiloxin H. The flavoprotein monooxygenases ustF1 and ustF2 then participate in the modification of the side chain of S-deoxyustiloxin H, leading to the synthesis of an oxime intermediate, via ustiloxin H. Finally, carboxylative dehydration performed by the cysteine desulfurase-like protein ustD yields ustiloxin B. The sequence is that of Oxidase ustYb from Aspergillus flavus (strain ATCC 200026 / FGSC A1120 / IAM 13836 / NRRL 3357 / JCM 12722 / SRRC 167).